Here is a 424-residue protein sequence, read N- to C-terminus: UDP-N-acetylglucosamine 1-carboxyvinyltransferase (424 aa).

22–23 (KN) is a binding site for phosphoenolpyruvate. Residue R98 coordinates UDP-N-acetyl-alpha-D-glucosamine. C122 (proton donor) is an active-site residue. The residue at position 122 (C122) is a 2-(S-cysteinyl)pyruvic acid O-phosphothioketal. Residues 127-131 (RPVDQ), D312, and I334 contribute to the UDP-N-acetyl-alpha-D-glucosamine site.

It belongs to the EPSP synthase family. MurA subfamily.

It localises to the cytoplasm. The enzyme catalyses phosphoenolpyruvate + UDP-N-acetyl-alpha-D-glucosamine = UDP-N-acetyl-3-O-(1-carboxyvinyl)-alpha-D-glucosamine + phosphate. It functions in the pathway cell wall biogenesis; peptidoglycan biosynthesis. Functionally, cell wall formation. Adds enolpyruvyl to UDP-N-acetylglucosamine. This chain is UDP-N-acetylglucosamine 1-carboxyvinyltransferase, found in Xanthomonas campestris pv. campestris (strain B100).